The following is a 403-amino-acid chain: Sorting nexin-32 (403 aa).

The 149-residue stretch at 20-168 folds into the PX domain; the sequence is LQGDSSLQVE…VFLEYGQDLS (149 aa). Residues 258–335 are a coiled coil; it reads NQLRTSFLKL…KARTRNREVR (78 aa).

It belongs to the sorting nexin family.

In terms of biological role, may be involved in several stages of intracellular trafficking. The protein is Sorting nexin-32 (SNX32) of Homo sapiens (Human).